Here is a 331-residue protein sequence, read N- to C-terminus: Tetraacyldisaccharide 4'-kinase (331 aa).

Residue 55-62 (TAGGNGKT) coordinates ATP.

The protein belongs to the LpxK family.

It carries out the reaction a lipid A disaccharide + ATP = a lipid IVA + ADP + H(+). The protein operates within glycolipid biosynthesis; lipid IV(A) biosynthesis; lipid IV(A) from (3R)-3-hydroxytetradecanoyl-[acyl-carrier-protein] and UDP-N-acetyl-alpha-D-glucosamine: step 6/6. In terms of biological role, transfers the gamma-phosphate of ATP to the 4'-position of a tetraacyldisaccharide 1-phosphate intermediate (termed DS-1-P) to form tetraacyldisaccharide 1,4'-bis-phosphate (lipid IVA). This chain is Tetraacyldisaccharide 4'-kinase, found in Edwardsiella ictaluri (strain 93-146).